A 209-amino-acid polypeptide reads, in one-letter code: Ribosomal RNA large subunit methyltransferase E (209 aa).

Positions 63, 65, 83, 99, and 124 each coordinate S-adenosyl-L-methionine. The active-site Proton acceptor is the Lys164.

It belongs to the class I-like SAM-binding methyltransferase superfamily. RNA methyltransferase RlmE family.

It is found in the cytoplasm. The enzyme catalyses uridine(2552) in 23S rRNA + S-adenosyl-L-methionine = 2'-O-methyluridine(2552) in 23S rRNA + S-adenosyl-L-homocysteine + H(+). Its function is as follows. Specifically methylates the uridine in position 2552 of 23S rRNA at the 2'-O position of the ribose in the fully assembled 50S ribosomal subunit. In Aeromonas hydrophila subsp. hydrophila (strain ATCC 7966 / DSM 30187 / BCRC 13018 / CCUG 14551 / JCM 1027 / KCTC 2358 / NCIMB 9240 / NCTC 8049), this protein is Ribosomal RNA large subunit methyltransferase E.